The chain runs to 602 residues: Elongation factor 4 (602 aa).

The region spanning 8–190 is the tr-type G domain; that stretch reads DLIRNFSIVA…AIVHRLPPPK (183 aa). Residues 20–25 and 137–140 each bind GTP; these read DHGKST and NKID.

This sequence belongs to the TRAFAC class translation factor GTPase superfamily. Classic translation factor GTPase family. LepA subfamily.

Its subcellular location is the cell inner membrane. It catalyses the reaction GTP + H2O = GDP + phosphate + H(+). Functionally, required for accurate and efficient protein synthesis under certain stress conditions. May act as a fidelity factor of the translation reaction, by catalyzing a one-codon backward translocation of tRNAs on improperly translocated ribosomes. Back-translocation proceeds from a post-translocation (POST) complex to a pre-translocation (PRE) complex, thus giving elongation factor G a second chance to translocate the tRNAs correctly. Binds to ribosomes in a GTP-dependent manner. This chain is Elongation factor 4, found in Cereibacter sphaeroides (strain ATCC 17023 / DSM 158 / JCM 6121 / CCUG 31486 / LMG 2827 / NBRC 12203 / NCIMB 8253 / ATH 2.4.1.) (Rhodobacter sphaeroides).